We begin with the raw amino-acid sequence, 335 residues long: Tetraacyldisaccharide 4'-kinase (335 aa).

58–65 (TVGGVGKT) contacts ATP.

The protein belongs to the LpxK family.

It catalyses the reaction a lipid A disaccharide + ATP = a lipid IVA + ADP + H(+). The protein operates within glycolipid biosynthesis; lipid IV(A) biosynthesis; lipid IV(A) from (3R)-3-hydroxytetradecanoyl-[acyl-carrier-protein] and UDP-N-acetyl-alpha-D-glucosamine: step 6/6. In terms of biological role, transfers the gamma-phosphate of ATP to the 4'-position of a tetraacyldisaccharide 1-phosphate intermediate (termed DS-1-P) to form tetraacyldisaccharide 1,4'-bis-phosphate (lipid IVA). This Caulobacter sp. (strain K31) protein is Tetraacyldisaccharide 4'-kinase.